The chain runs to 452 residues: MARLLLLFFFFLILLHYASCSRHEQEKDRIFHLPGEPNDVSFSHFSGYITVNESAGRALFYWLTESPPSENPESKPLVLWLNGGPGCSSVAYGAAEEIGPFRINPDGKTLYHNPYSWNKLANLLFLESPAGVGFSYSNTTSDLYTAGDQRTAEDAYVFLVKWFERFPQYKHREFYIAGESYAGHYVPQLSQIVYEKRNPAINFKGFIVGNAVIDDYHDYVGLFEYWWAHGLISDLTYHNLRITCEFGSSEHPSSKCTKAMEAADLEQGNIDPYSIYTVTCKKEAAALRSRFSRVRHPWMWRAYDPCTEKYSGMYFNSPEVQKAMHANITGLAYPWKGCSDIVGEKWADSPLSMLPIYKELIAAGLRIWVFSGDTDSVVPITGTRYSIRALKLQPLSKWYPWNDDGQVGGWSQVYKGLTLVTIHGAGHEVPLFRPRRAFLLFQSFLDNKPLPM.

Residues 1 to 20 (MARLLLLFFFFLILLHYASC) form the signal peptide. Residues N52 and N138 are each glycosylated (N-linked (GlcNAc...) asparagine). Cystine bridges form between C87–C338, C244–C256, and C280–C306. The active site involves S180. A glycan (N-linked (GlcNAc...) asparagine) is linked at N327. Active-site residues include D375 and H427.

It belongs to the peptidase S10 family. In terms of tissue distribution, ubiquitous.

It localises to the secreted. Functionally, probable carboxypeptidase. The sequence is that of Serine carboxypeptidase-like 26 (SCPL26) from Arabidopsis thaliana (Mouse-ear cress).